Consider the following 375-residue polypeptide: Growth/differentiation factor 8 (375 aa).

Positions 1–23 (MQKIVVYVYIYLFVQISVDPVAL) are cleaved as a signal peptide. A propeptide spanning residues 24-266 (DGSSQPTENT…VTDTPKRSRR (243 aa)) is cleaved from the precursor. N-linked (GlcNAc...) asparagine glycosylation is present at Asn71. Disulfide bonds link Cys272-Cys282, Cys281-Cys340, Cys309-Cys372, and Cys313-Cys374.

Belongs to the TGF-beta family. Homodimer; disulfide-linked.

It localises to the secreted. Its function is as follows. Acts specifically as a negative regulator of skeletal muscle growth. In Coturnix coturnix (Common quail), this protein is Growth/differentiation factor 8 (MSTN).